Consider the following 283-residue polypeptide: Quinate/shikimate dehydrogenase (NAD(+)) (283 aa).

Shikimate-binding residues include serine 17, threonine 69, lysine 73, asparagine 94, and aspartate 110. Residues 17–19 (SRT), threonine 69, lysine 73, asparagine 94, and aspartate 110 each bind L-quinate. Residue lysine 73 is the Proton acceptor of the active site. NAD(+) contacts are provided by residues 137-138 (GV), aspartate 158, arginine 163, 203-206 (PMGM), alanine 213, valine 228, and glycine 251. Glutamine 258 is a shikimate binding site. Glutamine 258 serves as a coordination point for L-quinate.

Belongs to the shikimate dehydrogenase family. Homodimer.

The catalysed reaction is L-quinate + NAD(+) = 3-dehydroquinate + NADH + H(+). It carries out the reaction shikimate + NAD(+) = 3-dehydroshikimate + NADH + H(+). The protein operates within metabolic intermediate biosynthesis; chorismate biosynthesis; chorismate from D-erythrose 4-phosphate and phosphoenolpyruvate: step 4/7. It participates in aromatic compound metabolism; 3,4-dihydroxybenzoate biosynthesis; 3-dehydroquinate from D-quinate (NAD(+) route). Its function is as follows. Involved in the biosynthesis of the chorismate, which leads to the biosynthesis of aromatic amino acids, and plays a key role in the quinate degradation pathway. Catalyzes the NAD(+)-dependent oxidation of both quinate and shikimate to 3-dehydroquinate and 3-dehydroshikimate, respectively. It can only use NAD. This is Quinate/shikimate dehydrogenase (NAD(+)) from Corynebacterium glutamicum (strain ATCC 13032 / DSM 20300 / JCM 1318 / BCRC 11384 / CCUG 27702 / LMG 3730 / NBRC 12168 / NCIMB 10025 / NRRL B-2784 / 534).